Reading from the N-terminus, the 465-residue chain is Probable zinc metalloprotease PTT_17836 (465 aa).

The signal sequence occupies residues Met1–Ser20. The N-linked (GlcNAc...) asparagine glycan is linked to Asn140. Zn(2+) contacts are provided by His163, Asp183, and Glu216. An N-linked (GlcNAc...) asparagine glycan is attached at Asn231. Asp243 lines the Zn(2+) pocket. Asn272, Asn330, Asn378, Asn384, Asn421, and Asn426 each carry an N-linked (GlcNAc...) asparagine glycan. The Fibronectin type-III domain occupies Ala371 to Asn464.

The protein belongs to the peptidase M28 family. M28B subfamily. Requires Zn(2+) as cofactor.

It localises to the secreted. This Pyrenophora teres f. teres (strain 0-1) (Barley net blotch fungus) protein is Probable zinc metalloprotease PTT_17836.